Reading from the N-terminus, the 59-residue chain is Small, acid-soluble spore protein H 1 (59 aa).

This sequence belongs to the SspH family.

Its subcellular location is the spore core. In Bacillus cereus (strain ATCC 14579 / DSM 31 / CCUG 7414 / JCM 2152 / NBRC 15305 / NCIMB 9373 / NCTC 2599 / NRRL B-3711), this protein is Small, acid-soluble spore protein H 1 (sspH1).